Reading from the N-terminus, the 1000-residue chain is Probable coatomer subunit beta' (1000 aa).

WD repeat units follow at residues 13–52 (ARSD…LVKS), 55–94 (VCDV…RVHQ), 97–136 (AHSD…AMKQ), 140–180 (GHTH…PNFT), 183–224 (GHEK…CVQT), 227–266 (GHAQ…LETT), and 351–391 (LGSS…NKDF). A disordered region spans residues 863–1000 (PRQTETQLKA…MDDLNLDEED (138 aa)). Positions 901–915 (EPEEEEEQEEFDDDQ) are enriched in acidic residues. Residues 960–969 (SASSQQSAQD) show a composition bias toward low complexity. Acidic residues predominate over residues 970 to 1000 (FQDDTQWSDEDFGDAENGDLNMDDLNLDEED).

It belongs to the WD repeat COPB2 family. As to quaternary structure, oligomeric complex that consists of at least the alpha, beta, beta', gamma, delta, epsilon and zeta subunits.

The protein localises to the cytoplasm. It is found in the golgi apparatus membrane. It localises to the cytoplasmic vesicle. Its subcellular location is the COPI-coated vesicle membrane. In terms of biological role, the coatomer is a cytosolic protein complex that binds to dilysine motifs and reversibly associates with Golgi non-clathrin-coated vesicles, which further mediate biosynthetic protein transport from the ER, via the Golgi up to the trans Golgi network. Coatomer complex is required for budding from Golgi membranes, and is essential for the retrograde Golgi-to-ER transport of dilysine-tagged proteins. The protein is Probable coatomer subunit beta' (copb-2) of Caenorhabditis elegans.